Here is a 576-residue protein sequence, read N- to C-terminus: Pentatricopeptide repeat-containing protein At1g79080, chloroplastic (576 aa).

A chloroplast-targeting transit peptide spans 1–37 (MSTLLNSVLSMASPESSPRKAVGFVSHIPSGFLHFSS). PPR repeat units follow at residues 105–139 (NVAH…GIIP), 140–174 (DASA…GYPS), 175–209 (NTVT…GLAP), 210–244 (NAFT…GGEP), 245–279 (NLVS…GFKA), 280–314 (NVVS…DRAP), 315–349 (SVVT…NHQF), 352–386 (TATS…RCKP), 387–417 (NEGT…LSNK), 422–456 (THDF…GFDP), 457–487 (DAHT…MEES), 493–527 (TVDN…KRMP), and 528–562 (NETT…KVIG).

It belongs to the PPR family. P subfamily.

The protein localises to the plastid. The protein resides in the chloroplast. This is Pentatricopeptide repeat-containing protein At1g79080, chloroplastic from Arabidopsis thaliana (Mouse-ear cress).